Here is a 364-residue protein sequence, read N- to C-terminus: Chorismate synthase (364 aa).

Residue Arg-47 coordinates NADP(+). FMN is bound by residues 124-126, 240-241, Gly-284, 299-303, and Arg-326; these read RGS, NA, and KPTPS.

It belongs to the chorismate synthase family. It depends on FMNH2 as a cofactor.

The enzyme catalyses 5-O-(1-carboxyvinyl)-3-phosphoshikimate = chorismate + phosphate. It participates in metabolic intermediate biosynthesis; chorismate biosynthesis; chorismate from D-erythrose 4-phosphate and phosphoenolpyruvate: step 7/7. Catalyzes the anti-1,4-elimination of the C-3 phosphate and the C-6 proR hydrogen from 5-enolpyruvylshikimate-3-phosphate (EPSP) to yield chorismate, which is the branch point compound that serves as the starting substrate for the three terminal pathways of aromatic amino acid biosynthesis. This reaction introduces a second double bond into the aromatic ring system. This chain is Chorismate synthase, found in Methanobrevibacter smithii (strain ATCC 35061 / DSM 861 / OCM 144 / PS).